We begin with the raw amino-acid sequence, 1400 residues long: DNA-directed RNA polymerase subunit beta' (1400 aa).

Zn(2+) contacts are provided by Cys-70, Cys-72, Cys-85, and Cys-88. The Mg(2+) site is built by Asp-460, Asp-462, and Asp-464. Zn(2+) contacts are provided by Cys-814, Cys-888, Cys-895, and Cys-898.

Belongs to the RNA polymerase beta' chain family. The RNAP catalytic core consists of 2 alpha, 1 beta, 1 beta' and 1 omega subunit. When a sigma factor is associated with the core the holoenzyme is formed, which can initiate transcription. It depends on Mg(2+) as a cofactor. Requires Zn(2+) as cofactor.

The catalysed reaction is RNA(n) + a ribonucleoside 5'-triphosphate = RNA(n+1) + diphosphate. Functionally, DNA-dependent RNA polymerase catalyzes the transcription of DNA into RNA using the four ribonucleoside triphosphates as substrates. The sequence is that of DNA-directed RNA polymerase subunit beta' from Methylococcus capsulatus (strain ATCC 33009 / NCIMB 11132 / Bath).